The chain runs to 530 residues: Na(+)/H(+) antiporter NhaB (530 aa).

The next 12 helical transmembrane spans lie at 13–33 (FLGK…IINP), 98–118 (LLLV…LFIF), 123–145 (LGIQ…LSAF), 149–166 (LTVI…YSIY), 205–225 (LLMH…VGEP), 238–258 (FGEF…CGIL), 308–328 (IAVW…LIGL), 330–350 (VIIL…GKAF), 356–376 (FTAL…QALF), 393–413 (LALF…VFVG), 451–471 (ATPN…APLI), and 480–500 (IMAL…IVFF).

It belongs to the NhaB Na(+)/H(+) (TC 2.A.34) antiporter family.

It is found in the cell inner membrane. The enzyme catalyses 2 Na(+)(in) + 3 H(+)(out) = 2 Na(+)(out) + 3 H(+)(in). In terms of biological role, na(+)/H(+) antiporter that extrudes sodium in exchange for external protons. This chain is Na(+)/H(+) antiporter NhaB, found in Vibrio atlanticus (strain LGP32) (Vibrio splendidus (strain Mel32)).